A 137-amino-acid polypeptide reads, in one-letter code: Probable 4-amino-4-deoxy-L-arabinose-phosphoundecaprenol flippase subunit ArnF (137 aa).

The Cytoplasmic portion of the chain corresponds to 1–3 (MNA). A helical transmembrane segment spans residues 4–24 (LRGWLAALGSMLLASAAQLGM). Topologically, residues 25-44 (RWGMSRLPLPEAWAGQTPER) are periplasmic. The chain crosses the membrane as a helical span at residues 45–65 (AALLAVALAVAAYAASLLCWL). At 66-76 (AALRHLPLGRA) the chain is on the cytoplasmic side. Residues 77–97 (YSLLSASYALVYLLAASLPAF) traverse the membrane as a helical segment. The Periplasmic segment spans residues 98–100 (DET). The helical transmembrane segment at 101-121 (FSTSKILGVGLVVLGVLTVNA) threads the bilayer. The Cytoplasmic portion of the chain corresponds to 122-137 (RRTAAAPAHHPSRKAP).

Belongs to the ArnF family. In terms of assembly, heterodimer of ArnE and ArnF.

It is found in the cell inner membrane. It participates in bacterial outer membrane biogenesis; lipopolysaccharide biosynthesis. Functionally, translocates 4-amino-4-deoxy-L-arabinose-phosphoundecaprenol (alpha-L-Ara4N-phosphoundecaprenol) from the cytoplasmic to the periplasmic side of the inner membrane. This chain is Probable 4-amino-4-deoxy-L-arabinose-phosphoundecaprenol flippase subunit ArnF, found in Pseudomonas aeruginosa (strain LESB58).